The sequence spans 248 residues: Small ribosomal subunit protein uS3 (248 aa).

Positions 38-106 (VREYLVKTLD…QVALNILEVK (69 aa)) constitute a KH type-2 domain. A compositionally biased stretch (basic and acidic residues) spans 213–230 (ESEINAPAERRGRGDRNG). A disordered region spans residues 213-248 (ESEINAPAERRGRGDRNGRPRRGGQRRQRSEQKQEG).

It belongs to the universal ribosomal protein uS3 family. In terms of assembly, part of the 30S ribosomal subunit. Forms a tight complex with proteins S10 and S14.

Functionally, binds the lower part of the 30S subunit head. Binds mRNA in the 70S ribosome, positioning it for translation. The sequence is that of Small ribosomal subunit protein uS3 from Corynebacterium diphtheriae (strain ATCC 700971 / NCTC 13129 / Biotype gravis).